The following is a 110-amino-acid chain: Cytochrome c (110 aa).

Heme c contacts are provided by cysteine 21, cysteine 24, histidine 25, and methionine 87.

This sequence belongs to the cytochrome c family. Post-translationally, binds 1 heme c group covalently per subunit.

Its subcellular location is the mitochondrion intermembrane space. In terms of biological role, electron carrier protein. The oxidized form of the cytochrome c heme group can accept an electron from the heme group of the cytochrome c1 subunit of cytochrome reductase. Cytochrome c then transfers this electron to the cytochrome oxidase complex, the final protein carrier in the mitochondrial electron-transport chain. This chain is Cytochrome c (CYCK), found in Kluyveromyces lactis (strain ATCC 8585 / CBS 2359 / DSM 70799 / NBRC 1267 / NRRL Y-1140 / WM37) (Yeast).